A 721-amino-acid polypeptide reads, in one-letter code: Protein Hook homolog 2 (721 aa).

Residues 7-123 (VELCDSLLTW…KMVQLVLGCA (117 aa)) enclose the Calponin-homology (CH) domain. Coiled-coil stretches lie at residues 181 to 425 (LSED…RCSH) and 484 to 659 (DLQN…EKLI). Residues 696 to 721 (TNARRGQISRSHTLLPRYTDKRQSLS) form a disordered region.

It belongs to the hook family. In terms of assembly, interacts with microtubules.

It localises to the cytoplasm. The protein localises to the cytoskeleton. Its subcellular location is the microtubule organizing center. It is found in the centrosome. Its function is as follows. May function to promote vesicle trafficking and/or fusion. May contribute to the establishment and maintenance of centrosome function. This chain is Protein Hook homolog 2 (hook2), found in Xenopus laevis (African clawed frog).